The primary structure comprises 175 residues: Gamma-crystallin A (175 aa).

2 consecutive Beta/gamma crystallin 'Greek key' domains span residues 2-40 and 41-83; these read GKITFYEDRGFQGHCYQCSSNNCLQQPYFSRCNSIRVDV and HSWF…RLIP. The connecting peptide stretch occupies residues 84-88; that stretch reads QHTGT. 2 Beta/gamma crystallin 'Greek key' domains span residues 89–129 and 130–172; these read FRMR…RVLE and GSWV…RRVM.

The protein belongs to the beta/gamma-crystallin family.

Functionally, crystallins are the dominant structural components of the vertebrate eye lens. The chain is Gamma-crystallin A (CRYGA) from Bos taurus (Bovine).